The following is a 393-amino-acid chain: Neuroplastin (393 aa).

Positions 1–28 are cleaved as a signal peptide; that stretch reads MSGSSLPGALALSLLLVSGSLLPGPGAA. Ig-like domains are found at residues 29–134, 148–234, and 237–327; these read QNAG…PSIT, PRIV…IEVK, and PDIT…ASVS. At 29 to 338 the chain is on the extracellular side; the sequence is QNAGFVKSPM…VLRVRSHLAP (310 aa). The cysteines at positions 52 and 116 are disulfide-linked. A narpin; mediates binding with FGFR1 and has antidepressant-like activity region spans residues 149–161; that stretch reads RIVTSEEVIIRDS. C169 and C217 are oxidised to a cystine. N-linked (GlcNAc...) asparagine glycosylation is found at N170, N196, N228, N283, N295, and N316. C258 and C315 are oxidised to a cystine. Residues 339–359 form a helical membrane-spanning segment; sequence LWPFLGILAEIIILVVIIVVY. Residues 360 to 393 are Cytoplasmic-facing; sequence EKRKRPDEVPDAGPMKTNSTNNHKDKNLRQRNTN. The segment at 366 to 393 is disordered; it reads DEVPDAGPMKTNSTNNHKDKNLRQRNTN.

Interacts with ATP2B1; this interaction stabilizes ATP2B1 and increases ATPase activity; this interaction controls T cell calcium homeostasis following T cell activation. Interacts with XKR8; promoting its localization at the cell membrane. Isoform 1 and isoform 2 are N-glycosylated. In terms of tissue distribution, isoform 1 is ubiquitously expressed. Isoform 2 is brain-specific. In brain isoform 2 is highly expressed in hippocampus and cerebral cortex and weakly in cerebellum and lower brain regions. In the hippocampus isoform 2 is found in the dentate gyrus and CA1-CA4, the striatum oriens of CA3 shows the higher level.

It is found in the cell membrane. It localises to the postsynaptic density. Probable homophilic and heterophilic cell adhesion molecule involved in long term potentiation at hippocampal excitatory synapses through activation of p38MAPK. May also regulate neurite outgrowth by activating the FGFR1 signaling pathway. May play a role in synaptic plasticity. Also acts as a chaperone for ATP2B1; stabilizes ATP2B1 and increases its ATPase activity. Promotes localization of XKR8 at the cell membrane. The sequence is that of Neuroplastin (Nptn) from Rattus norvegicus (Rat).